Consider the following 99-residue polypeptide: CTP synthase (99 aa).

A Glutamine amidotransferase type-1 domain is found at 1–99; it reads TMVTKLEKDS…FIKAIIENNK (99 aa). Arg-28 lines the L-glutamine pocket. Active-site residues include His-73 and Glu-75.

It belongs to the CTP synthase family. Homotetramer.

The enzyme catalyses UTP + L-glutamine + ATP + H2O = CTP + L-glutamate + ADP + phosphate + 2 H(+). It carries out the reaction L-glutamine + H2O = L-glutamate + NH4(+). It catalyses the reaction UTP + NH4(+) + ATP = CTP + ADP + phosphate + 2 H(+). The protein operates within pyrimidine metabolism; CTP biosynthesis via de novo pathway; CTP from UDP: step 2/2. Allosterically activated by GTP, when glutamine is the substrate; GTP has no effect on the reaction when ammonia is the substrate. The allosteric effector GTP functions by stabilizing the protein conformation that binds the tetrahedral intermediate(s) formed during glutamine hydrolysis. Inhibited by the product CTP, via allosteric rather than competitive inhibition. In terms of biological role, catalyzes the ATP-dependent amination of UTP to CTP with either L-glutamine or ammonia as the source of nitrogen. Regulates intracellular CTP levels through interactions with the four ribonucleotide triphosphates. In Mycoplasma capricolum subsp. capripneumoniae, this protein is CTP synthase.